The chain runs to 566 residues: E3 ubiquitin-protein ligase Rnf220 (566 aa).

A Glycyl lysine isopeptide (Lys-Gly) (interchain with G-Cter in SUMO2) cross-link involves residue lysine 277. Residues 277–300 (KREGDSPTASPHSSATEDLHHSDR) form a disordered region. Over residues 291–300 (ATEDLHHSDR) the composition is skewed to basic and acidic residues. At serine 390 the chain carries Phosphoserine. Positions 485–513 (EESAVTTFEALKARVRELERQLSRGDRYK) form a coiled coil. Residues 514–522 (CLICMDSYS) are required for targeting to the cytoplasm. The RING-type zinc-finger motif lies at 514 to 553 (CLICMDSYSMPLTSIQCWHVHCEECWLRTLGAKKLCPQCN).

As to quaternary structure, interacts with SIN3B. Interacts with CTNNB1 (via Armadillo repeats 2-8). Interacts with USP7 (via MATH domain). Auto-ubiquitinated; leads to proteasomal degradation. In terms of tissue distribution, in the brain, expressed in the hippocampus, telenecephalon and cerebellum. No expression in astro glial cells or in neural progenitor cells.

It is found in the cytoplasm. Its subcellular location is the nucleus. The catalysed reaction is S-ubiquitinyl-[E2 ubiquitin-conjugating enzyme]-L-cysteine + [acceptor protein]-L-lysine = [E2 ubiquitin-conjugating enzyme]-L-cysteine + N(6)-ubiquitinyl-[acceptor protein]-L-lysine.. It participates in protein modification; protein ubiquitination. In terms of biological role, E3 ubiquitin-protein ligase that promotes the ubiquitination and proteasomal degradation of SIN3B. Independently of its E3 ligase activity, acts as a CTNNB1 stabilizer through USP7-mediated deubiquitination of CTNNB1 and promotes Wnt signaling. Plays a critical role in the regulation of nuclear lamina. The chain is E3 ubiquitin-protein ligase Rnf220 (Rnf220) from Mus musculus (Mouse).